We begin with the raw amino-acid sequence, 410 residues long: Gamma-glutamyl phosphate reductase (410 aa).

The protein belongs to the gamma-glutamyl phosphate reductase family.

The protein localises to the cytoplasm. It carries out the reaction L-glutamate 5-semialdehyde + phosphate + NADP(+) = L-glutamyl 5-phosphate + NADPH + H(+). Its pathway is amino-acid biosynthesis; L-proline biosynthesis; L-glutamate 5-semialdehyde from L-glutamate: step 2/2. Its function is as follows. Catalyzes the NADPH-dependent reduction of L-glutamate 5-phosphate into L-glutamate 5-semialdehyde and phosphate. The product spontaneously undergoes cyclization to form 1-pyrroline-5-carboxylate. The chain is Gamma-glutamyl phosphate reductase from Campylobacter jejuni subsp. jejuni serotype O:23/36 (strain 81-176).